The following is a 355-amino-acid chain: Protein RecA (355 aa).

67 to 74 (GPESSGKT) is a binding site for ATP. Positions 331-355 (NQDDKPDFTPAAHEVDEGSEAKENF) are disordered.

The protein belongs to the RecA family.

It localises to the cytoplasm. Functionally, can catalyze the hydrolysis of ATP in the presence of single-stranded DNA, the ATP-dependent uptake of single-stranded DNA by duplex DNA, and the ATP-dependent hybridization of homologous single-stranded DNAs. It interacts with LexA causing its activation and leading to its autocatalytic cleavage. The sequence is that of Protein RecA from Erwinia tasmaniensis (strain DSM 17950 / CFBP 7177 / CIP 109463 / NCPPB 4357 / Et1/99).